The primary structure comprises 323 residues: MNQLLCPGLYCPFPSQTNKYVDVLEEYSLEWVLRFNLLANESAYKRFCKSKFFFLAASAYPDSKFEELKITHDWLSWVFIWDDQCDLSELKKQPEVLNNFHQRYLEILNGAELTSQDTLFSHALIDLRKRTLQRASIKWFNYFISYLEDYFYGCVQEATNRAKGIVPDLDTYIMIRRSSVGVYAVLALSEFCNQFIIPDVLRNHHLVKKLELITTDIIAWSNDIFSASREIASGDVHNLIFVLHYHKKISLEKAIEQVVKIHNEEVHSLIKVESSLSFFSEELDVEITKYISGMHSWIRGNLDWCYESYRYHNLERLELTEFK.

Residues Asp82, Asp86, Asn222, Ser226, and Glu230 each contribute to the Mg(2+) site. The DDXXD motif motif lies at 82–86 (DDQCD).

Belongs to the terpene synthase family. The cofactor is Mg(2+).

It catalyses the reaction (2E,6E)-farnesyl diphosphate = 5-epi-alpha-selinene + diphosphate. Functionally, catalyzes the cyclization of farnesyl diphosphate (FPP) to the sesquiterpene germacrene A. The polypeptide is Germacrene A synthase (Nostoc punctiforme (strain ATCC 29133 / PCC 73102)).